The following is a 95-amino-acid chain: Integration host factor subunit beta (95 aa).

The interval 56–76 is disordered; sequence RAPRTGRNPKTGTSVDLDGKY.

It belongs to the bacterial histone-like protein family. Heterodimer of an alpha and a beta chain.

Its function is as follows. This protein is one of the two subunits of integration host factor, a specific DNA-binding protein that functions in genetic recombination as well as in transcriptional and translational control. The chain is Integration host factor subunit beta from Shewanella sediminis (strain HAW-EB3).